The following is a 262-amino-acid chain: UPF0739 protein C1orf74 homolog (262 aa).

The protein belongs to the UPF0739 family.

This is UPF0739 protein C1orf74 homolog from Xenopus laevis (African clawed frog).